We begin with the raw amino-acid sequence, 259 residues long: Cytochrome c oxidase subunit 3 (259 aa).

Helical transmembrane passes span 13–33 (PWPLTSSIGAFTLAIGLASWF), 36–56 (HGFLCLTLAAFLIIVSMIQWW), 80–100 (GMILFITSEVMFFLAFFWAFF), 125–145 (FSVPLLNTAVLLASGVTVTWA), 160–180 (ALILTVCLGAYFTFLQAGEYM), 195–215 (FFVATGFHGLHVLIGSSFLAI), and 237–257 (AWYWHFVDVVWICLYLCIYWW).

Belongs to the cytochrome c oxidase subunit 3 family. As to quaternary structure, component of the cytochrome c oxidase (complex IV, CIV), a multisubunit enzyme composed of a catalytic core of 3 subunits and several supernumerary subunits. The complex exists as a monomer or a dimer and forms supercomplexes (SCs) in the inner mitochondrial membrane with ubiquinol-cytochrome c oxidoreductase (cytochrome b-c1 complex, complex III, CIII).

The protein resides in the mitochondrion inner membrane. The enzyme catalyses 4 Fe(II)-[cytochrome c] + O2 + 8 H(+)(in) = 4 Fe(III)-[cytochrome c] + 2 H2O + 4 H(+)(out). Component of the cytochrome c oxidase, the last enzyme in the mitochondrial electron transport chain which drives oxidative phosphorylation. The respiratory chain contains 3 multisubunit complexes succinate dehydrogenase (complex II, CII), ubiquinol-cytochrome c oxidoreductase (cytochrome b-c1 complex, complex III, CIII) and cytochrome c oxidase (complex IV, CIV), that cooperate to transfer electrons derived from NADH and succinate to molecular oxygen, creating an electrochemical gradient over the inner membrane that drives transmembrane transport and the ATP synthase. Cytochrome c oxidase is the component of the respiratory chain that catalyzes the reduction of oxygen to water. Electrons originating from reduced cytochrome c in the intermembrane space (IMS) are transferred via the dinuclear copper A center (CU(A)) of subunit 2 and heme A of subunit 1 to the active site in subunit 1, a binuclear center (BNC) formed by heme A3 and copper B (CU(B)). The BNC reduces molecular oxygen to 2 water molecules using 4 electrons from cytochrome c in the IMS and 4 protons from the mitochondrial matrix. In Lumbricus terrestris (Common earthworm), this protein is Cytochrome c oxidase subunit 3 (COIII).